A 45-amino-acid polypeptide reads, in one-letter code: Large ribosomal subunit protein bL34 (45 aa).

This sequence belongs to the bacterial ribosomal protein bL34 family.

This is Large ribosomal subunit protein bL34 from Kineococcus radiotolerans (strain ATCC BAA-149 / DSM 14245 / SRS30216).